The primary structure comprises 207 residues: Large ribosomal subunit protein uL4 (207 aa).

The disordered stretch occupies residues 47–78 (GTASSKTRAEVRGGGKKPWRQKGTGRARVGSS). The segment covering 60–71 (GGKKPWRQKGTG) has biased composition (basic residues).

This sequence belongs to the universal ribosomal protein uL4 family. Part of the 50S ribosomal subunit.

In terms of biological role, one of the primary rRNA binding proteins, this protein initially binds near the 5'-end of the 23S rRNA. It is important during the early stages of 50S assembly. It makes multiple contacts with different domains of the 23S rRNA in the assembled 50S subunit and ribosome. Forms part of the polypeptide exit tunnel. The polypeptide is Large ribosomal subunit protein uL4 (Syntrophomonas wolfei subsp. wolfei (strain DSM 2245B / Goettingen)).